The chain runs to 330 residues: DNA primase small subunit PriS (330 aa).

Catalysis depends on residues D101 and D103. C116, C119, C128, and D131 together coordinate Zn(2+). D235 is a catalytic residue.

The protein belongs to the eukaryotic-type primase small subunit family. In terms of assembly, heterodimer of a small subunit (PriS) and a large subunit (PriL). Mg(2+) is required as a cofactor. It depends on Mn(2+) as a cofactor.

Functionally, catalytic subunit of DNA primase, an RNA polymerase that catalyzes the synthesis of short RNA molecules used as primers for DNA polymerase during DNA replication. The small subunit contains the primase catalytic core and has DNA synthesis activity on its own. Binding to the large subunit stabilizes and modulates the activity, increasing the rate of DNA synthesis while decreasing the length of the DNA fragments, and conferring RNA synthesis capability. The DNA polymerase activity may enable DNA primase to also catalyze primer extension after primer synthesis. May also play a role in DNA repair. This chain is DNA primase small subunit PriS, found in Saccharolobus islandicus (strain Y.N.15.51 / Yellowstone #2) (Sulfolobus islandicus).